The following is a 429-amino-acid chain: Enolase (429 aa).

Glutamine 165 is a (2R)-2-phosphoglycerate binding site. The active-site Proton donor is glutamate 207. Positions 244, 287, and 314 each coordinate Mg(2+). The (2R)-2-phosphoglycerate site is built by lysine 339, arginine 368, serine 369, and lysine 390. Residue lysine 339 is the Proton acceptor of the active site.

The protein belongs to the enolase family. It depends on Mg(2+) as a cofactor.

The protein localises to the cytoplasm. It localises to the secreted. Its subcellular location is the cell surface. The catalysed reaction is (2R)-2-phosphoglycerate = phosphoenolpyruvate + H2O. The protein operates within carbohydrate degradation; glycolysis; pyruvate from D-glyceraldehyde 3-phosphate: step 4/5. In terms of biological role, catalyzes the reversible conversion of 2-phosphoglycerate (2-PG) into phosphoenolpyruvate (PEP). It is essential for the degradation of carbohydrates via glycolysis. The polypeptide is Enolase (Roseiflexus castenholzii (strain DSM 13941 / HLO8)).